Consider the following 540-residue polypeptide: 2,3-bisphosphoglycerate-independent phosphoglycerate mutase (540 aa).

Residues Asp13 and Ser63 each coordinate Mn(2+). The active-site Phosphoserine intermediate is the Ser63. Residues His124, 154–155 (RD), Arg186, Arg192, 262–265 (RPDR), and Lys356 each bind substrate. Positions 423, 427, 464, 465, and 483 each coordinate Mn(2+).

The protein belongs to the BPG-independent phosphoglycerate mutase family. As to quaternary structure, monomer. Mn(2+) serves as cofactor.

It carries out the reaction (2R)-2-phosphoglycerate = (2R)-3-phosphoglycerate. It functions in the pathway carbohydrate degradation; glycolysis; pyruvate from D-glyceraldehyde 3-phosphate: step 3/5. In terms of biological role, catalyzes the interconversion of 2-phosphoglycerate and 3-phosphoglycerate. In Chloroflexus aggregans (strain MD-66 / DSM 9485), this protein is 2,3-bisphosphoglycerate-independent phosphoglycerate mutase.